Reading from the N-terminus, the 397-residue chain is Imidazolonepropionase (397 aa).

Fe(3+)-binding residues include histidine 66 and histidine 68. 2 residues coordinate Zn(2+): histidine 66 and histidine 68. The 4-imidazolone-5-propanoate site is built by arginine 75, tyrosine 138, and histidine 171. Residue tyrosine 138 coordinates N-formimidoyl-L-glutamate. Histidine 236 contacts Fe(3+). Histidine 236 contacts Zn(2+). Residue glutamine 239 coordinates 4-imidazolone-5-propanoate. Aspartate 311 contributes to the Fe(3+) binding site. Aspartate 311 contacts Zn(2+). Positions 313 and 315 each coordinate N-formimidoyl-L-glutamate. A 4-imidazolone-5-propanoate-binding site is contributed by serine 316.

This sequence belongs to the metallo-dependent hydrolases superfamily. HutI family. The cofactor is Zn(2+). It depends on Fe(3+) as a cofactor.

The protein localises to the cytoplasm. The catalysed reaction is 4-imidazolone-5-propanoate + H2O = N-formimidoyl-L-glutamate. Its pathway is amino-acid degradation; L-histidine degradation into L-glutamate; N-formimidoyl-L-glutamate from L-histidine: step 3/3. In terms of biological role, catalyzes the hydrolytic cleavage of the carbon-nitrogen bond in imidazolone-5-propanoate to yield N-formimidoyl-L-glutamate. It is the third step in the universal histidine degradation pathway. The polypeptide is Imidazolonepropionase (Roseobacter denitrificans (strain ATCC 33942 / OCh 114) (Erythrobacter sp. (strain OCh 114))).